Here is a 63-residue protein sequence, read N- to C-terminus: Large ribosomal subunit protein uL29 (63 aa).

This sequence belongs to the universal ribosomal protein uL29 family.

The polypeptide is Large ribosomal subunit protein uL29 (Bordetella petrii (strain ATCC BAA-461 / DSM 12804 / CCUG 43448)).